A 1959-amino-acid chain; its full sequence is Zinc finger protein hangover (1959 aa).

One can recognise a ZAD domain in the interval 79–155 (NCCRLCIAPQ…FSSQAKQRQW (77 aa)). The Zn(2+) site is built by Cys81, Cys84, Cys128, and Cys131. Positions 178 to 208 (GFFDQHLHQQQQHHQHLENELEAEKEKATPT) are disordered. Over residues 192–205 (QHLENELEAEKEKA) the composition is skewed to basic and acidic residues. Ser228 carries the phosphoserine modification. Position 246 is a phosphothreonine (Thr246). The segment at 318-341 (ASCRACSLQFSTRANARRHERNLH) adopts a C2H2-type 1 zinc-finger fold. The segment at 447–469 (MTCRCCNKYFSTYKNFMAHVRKK) adopts a C2H2-type 2; degenerate zinc-finger fold. The segment at 581–604 (YECKLCPKGFRTKHEFRTHVYDKH) adopts a C2H2-type 3 zinc-finger fold. The segment at 674-762 (AVSDNASTTG…ANRDASAPKS (89 aa)) is disordered. Residues 677–693 (DNASTTGSGMARSNSME) are compositionally biased toward polar residues. The residue at position 680 (Ser680) is a Phosphoserine. Composition is skewed to low complexity over residues 716 to 727 (SSSAAPPLTSTP) and 741 to 759 (TSAS…DASA). 2 consecutive C2H2-type zinc fingers follow at residues 770–793 (QVCP…ESKH) and 801–824 (YKCV…INVH). Residues Ser832, Ser894, Ser895, Ser898, and Ser899 each carry the phosphoserine modification. Residues 908–930 (KECPICNAVFSNNIGLSNHMRSH) form a C2H2-type 6 zinc finger. The segment at 960–991 (TDSELGVGGTMSESAPATPANVPPAMANQTPQ) is disordered. 5 C2H2-type zinc fingers span residues 1011–1034 (MRCR…LTDH), 1042–1065 (IKCK…FKVH), 1078–1101 (FECD…RSVH), 1154–1176 (YQCK…INSH), and 1184–1207 (YSCK…YKKH). A compositionally biased stretch (polar residues) spans 1233–1253 (TPTCNRKPITSTGAHQQQDGQ). The segment at 1233 to 1301 (TPTCNRKPIT…GNGTTVGVAS (69 aa)) is disordered. The segment covering 1255 to 1267 (HSHHTAKRTIFRH) has biased composition (basic residues). Residues 1271–1283 (DDDDEEDDDEQQQ) show a composition bias toward acidic residues. 2 C2H2-type zinc fingers span residues 1318 to 1340 (VACT…IQKH) and 1375 to 1397 (YACD…RKWH). The span at 1445–1467 (QQSLNNSCNSSMNHNNNSSSNRS) shows a compositional bias: low complexity. The disordered stretch occupies residues 1445 to 1471 (QQSLNNSCNSSMNHNNNSSSNRSKSMK). C2H2-type zinc fingers lie at residues 1476–1499 (LKCE…YELH) and 1552–1574 (WGCD…INNH). The tract at residues 1627-1865 (AAGATTTDKL…STGERRKKAV (239 aa)) is disordered. Positions 1639-1695 (PDEEDSDDLDEDSSGDDDDSSGTGDDDDDDDSDDDEDGEGEDEDEEGDGGEGEDEEG) are enriched in acidic residues. Residues 1697-1715 (QPPAQLLPQQQHKTDLNLN) are compositionally biased toward low complexity. 2 stretches are compositionally biased toward acidic residues: residues 1716-1758 (QDDD…EEPE) and 1782-1829 (SDDE…EDEP). Residues 1833 to 1851 (STASFSESESSTTTTSNSH) show a composition bias toward low complexity. A C2H2-type 16 zinc finger spans residues 1873–1895 (FTCDLCQLCFDSQELLQSHIKSH). Positions 1933-1959 (PDSKSAVLANNNNSKTSSKTVAAGATN) are disordered. Over residues 1942–1952 (NNNNSKTSSKT) the composition is skewed to low complexity.

In terms of tissue distribution, expressed ubiquitously in the nervous system, in neurons not glia.

It is found in the nucleus. In terms of biological role, required for normal development of ethanol tolerance. Relies on two distinct molecular pathways: a cellular stress pathway defined by hang, and a parallel pathway requiring octopamine. The polypeptide is Zinc finger protein hangover (hang) (Drosophila melanogaster (Fruit fly)).